A 142-amino-acid polypeptide reads, in one-letter code: Lysozyme 2 (142 aa).

An N-terminal signal peptide occupies residues 1 to 20; it reads MLKLTLTILAAVLLVTPAFG. Residues 21-142 enclose the C-type lysozyme domain; it reads KVYTRCSLAR…HTLPSIDDCF (122 aa). 4 disulfide bridges follow: cysteine 26–cysteine 141, cysteine 47–cysteine 131, cysteine 82–cysteine 98, and cysteine 94–cysteine 112. Residue glutamate 52 is part of the active site. Asparagine 66 carries N-linked (GlcNAc...) asparagine glycosylation. Residue aspartate 70 is part of the active site.

The protein belongs to the glycosyl hydrolase 22 family. In terms of tissue distribution, expressed only in the midgut where it is concentrated around the middle in all larval stages.

The protein resides in the secreted. The enzyme catalyses Hydrolysis of (1-&gt;4)-beta-linkages between N-acetylmuramic acid and N-acetyl-D-glucosamine residues in a peptidoglycan and between N-acetyl-D-glucosamine residues in chitodextrins.. Functionally, lysozymes have primarily a bacteriolytic function. Shows antibacterial activity against Gram-positive bacterium M.luteus but shows no activity against Gram-negative bacterium E.coli. Likely to play a role in the eradication of ingested pathogens during their passage through the intestine. The chain is Lysozyme 2 from Lucilia sericata (Green bottle fly).